The chain runs to 348 residues: Dihydroorotase (348 aa).

Positions 17 and 19 each coordinate Zn(2+). Residues 19 to 21 and Asn45 contribute to the substrate site; that span reads HLR. Zn(2+) contacts are provided by Lys103, His140, and His178. Residue Lys103 is modified to N6-carboxylysine. His140 serves as a coordination point for substrate. Leu223 is a substrate binding site. Asp251 contributes to the Zn(2+) binding site. Residue Asp251 is part of the active site. The substrate site is built by His255 and Ala267.

This sequence belongs to the metallo-dependent hydrolases superfamily. DHOase family. Class II DHOase subfamily. In terms of assembly, homodimer. The cofactor is Zn(2+).

It catalyses the reaction (S)-dihydroorotate + H2O = N-carbamoyl-L-aspartate + H(+). Its pathway is pyrimidine metabolism; UMP biosynthesis via de novo pathway; (S)-dihydroorotate from bicarbonate: step 3/3. Catalyzes the reversible cyclization of carbamoyl aspartate to dihydroorotate. The sequence is that of Dihydroorotase from Escherichia coli O6:H1 (strain CFT073 / ATCC 700928 / UPEC).